Reading from the N-terminus, the 402-residue chain is Peptidyl-prolyl cis-trans isomerase FKBP8 (402 aa).

A compositionally biased stretch (acidic residues) spans 28 to 39; it reads DGVDDAEEEDDL. Positions 28–54 are disordered; sequence DGVDDAEEEDDLSGLPPLEDMGQPTVE. One can recognise a PPIase FKBP-type domain in the interval 110–194; the sequence is GQVVTVHLQM…CLEVTLKTAE (85 aa). The TPR 1 repeat unit spans residues 211 to 244; sequence ANRKRECGNAHYQRADFVLAANSYDLAIKAITSN. Glycyl lysine isopeptide (Lys-Gly) (interchain with G-Cter in ubiquitin) cross-links involve residues K239, K261, K263, and K274. TPR repeat units follow at residues 262 to 295 and 296 to 329; these read VKCLNNLAASQLKLDHYRAALRSCSQVLEHQPDN and IKALFRKGKVLAQQGEYSEAIPILRAALKLEPSN. The residue at position 286 (S286) is a Phosphoserine. Glycyl lysine isopeptide (Lys-Gly) (interchain with G-Cter in ubiquitin) cross-links involve residues K297, K304, K324, K330, K338, K341, and K342. A helical transmembrane segment spans residues 380-400; the sequence is WLFGATAVALGGVALSVVIAA.

Homomultimers or heteromultimers (Potential). Forms heterodimer with calmodulin. When activated by calmodulin and calcium, interacts with the BH4 domain of BCL2 and weakly with BCLX isoform Bcl-X(L). Does not bind and inhibit calcineurin. Interacts with ZFYVE27; may negatively regulate ZFYVE27 phosphorylation. Requires Ca(2+) as cofactor. Ubiquitinated by PRKN during mitophagy, leading to its degradation and enhancement of mitophagy. Deubiquitinated by USP30. As to expression, detected throughout the embryonic body, in caudal neural tube, limbs and head. Detected in adult retina, brain, heart, kidney, liver, pancreas, lung, testis and urinary bladder (at protein level). Detected in adult brain, kidney, liver, testis and trigeminal nerve, and in embryo. Detected at lower levels in lung, spleen, heart and ovary. Widely expressed in forebrain. Detected in the Purkinje cell layer in the cerebellum and in hippocampus neurons.

It is found in the mitochondrion membrane. It carries out the reaction [protein]-peptidylproline (omega=180) = [protein]-peptidylproline (omega=0). Functionally, constitutively inactive PPiase, which becomes active when bound to calmodulin and calcium. Seems to act as a chaperone for BCL2, targets it to the mitochondria and modulates its phosphorylation state. The BCL2/FKBP8/calmodulin/calcium complex probably interferes with the binding of BCL2 to its targets. The active form of FKBP8 may therefore play a role in the regulation of apoptosis. Required for normal embryonic development. The sequence is that of Peptidyl-prolyl cis-trans isomerase FKBP8 (Fkbp8) from Mus musculus (Mouse).